A 389-amino-acid chain; its full sequence is Very-long-chain 3-oxoacyl-CoA reductase (389 aa).

Residues 34–54 (IAVFLLAIGLFHVALKVVSYV) traverse the membrane as a helical segment. NADP(+) is bound by residues valine 80, aspartate 134, asparagine 162, tyrosine 239, lysine 243, valine 272, and serine 274. The active-site Proton donor is tyrosine 239. Lysine 243 functions as the Lowers pKa of active site Tyr in the catalytic mechanism. Residues 359–389 (QAAGGVADPKNTTAAREGYATESLKNETLKH) are disordered.

The protein belongs to the short-chain dehydrogenases/reductases (SDR) family.

It localises to the endoplasmic reticulum membrane. The enzyme catalyses a very-long-chain (3R)-3-hydroxyacyl-CoA + NADP(+) = a very-long-chain 3-oxoacyl-CoA + NADPH + H(+). Its pathway is lipid metabolism; fatty acid biosynthesis. In terms of biological role, component of the microsomal membrane bound fatty acid elongation system, which produces the 26-carbon very long-chain fatty acids (VLCFA) from palmitate. Catalyzes the reduction of the 3-ketoacyl-CoA intermediate that is formed in each cycle of fatty acid elongation. VLCFAs serve as precursors for ceramide and sphingolipids. The polypeptide is Very-long-chain 3-oxoacyl-CoA reductase (Yarrowia lipolytica (strain CLIB 122 / E 150) (Yeast)).